The sequence spans 591 residues: Oxaloacetate decarboxylase alpha chain (591 aa).

Residues 3-263 (IAITDVVLRD…DTGLDILKLE (261 aa)) enclose the Pyruvate carboxyltransferase domain. One can recognise a Biotinyl-binding domain in the interval 518-591 (PAGAGTPVTA…SVGDTLMTLA (74 aa)). An N6-biotinyllysine modification is found at Lys-557.

As to quaternary structure, composed of three chains (alpha, beta, and gamma). Requires biotin as cofactor.

The enzyme catalyses oxaloacetate + 2 Na(+)(in) + H(+) = pyruvate + 2 Na(+)(out) + CO2. Catalyzes the decarboxylation of oxaloacetate coupled to Na(+) translocation. The protein is Oxaloacetate decarboxylase alpha chain (oadA1) of Salmonella typhi.